Reading from the N-terminus, the 1333-residue chain is MDIDAEREKITQEIQELERILYPGSTSVHFEVSESSLSSDSEADSLPDEDLETAGAPILEEEGSSESSNDEEDPKDKALPEDPETCLQLNMVYQEVIREKLAEVSQLLAQNQEQQEEILFDLSGTKCPKVKDGRSLPSYMYIGHFLKPYFKDKVTGVGPPANEETREKATQGIKAFEQLLVTKWKHWEKALLRKSVVSDRLQRLLQPKLLKLEYLHEKQSRVSSELERQALEKQIKEAEKEIQDINQLPEEALLGNRLDSHDWEKISNINFEGARSAEEIRKFWQSSEHPSISKQEWSTEEVERLKAIAATHGHLEWHLVAEELGTSRSAFQCLQKFQQYNKTLKRKEWTEEEDHMLTQLVQEMRVGNHIPYRKIVYFMEGRDSMQLIYRWTKSLDPSLKRGFWAPEEDAKLLQAVAKYGAQDWFKIREEVPGRSDAQCRDRYIRRLHFSLKKGRWNAKEEQQLIQLIEKYGVGHWARIASELPHRSGSQCLSKWKILARKKQHLQRKRGQRPRHSSQWSSSGSSSSSSEDYGSSSGSDGSSGSENSDVELEASLEKSRALTPQQYRVPDIDLWVPTRLITSQSQREGTGCYPQHPAVSCCTQDASQNHHKEGSTTVSAAEKNQLQVPYETHSTVPRGDRFLHFSDTHSASLKDPACKSHTLMKERPKQPLLPSSRSGSDPGNNTAGPHLRQLWHGTYQNKQRRKRQALHRRLLKHRLLLAVIPWVGDINLACTQAPRRPATVQTKADSIRMQLECARLASTPVFTLLIQLLQIDTAGCMEVVRERKSQPPALLQPGTRNTQPHLLQASSNAKNNTGCLPSMTGEQTAKRASHKGRPRLGSCRTEATPFQVPVAAPRGLRPKPKTVSELLREKRLRESHAKKATQALGLNSQLLVSSPVILQPPLLPVPHGSPVVGPATSSVELSVPVAPVMVSSSPSGSWPVGGISATDKQPPNLQTISLNPPHKGTQVAAPAAFRSLALAPGQVPTGGHLSTLGQTSTTSQKQSLPKVLPILRAAPSLTQLSVQPPVSGQPLATKSSLPVNWVLTTQKLLSVQVPAVVGLPQSVMTPETIGLQAKQLPSPAKTPAFLEQPPASTDTEPKGPQGQEIPPTPGPEKAALDLSLLSQESEAAIVTWLKGCQGAFVPPLGSRMPYHPPSLCSLRALSSLLLQKQDLEQKASSLAASQAAGAQPDPKAGALQASLELVQRQFRDNPAYLLLKTRFLAIFSLPAFLATLPPNSIPTTLSPDVAVVSESDSEDLGDLELKDRARQLDCMACRVQASPAAPDPVQSHLVSPGQRAPSPGEVSAPSPLDASDGLDDLNVLRTRRARHSRR.

Residues 29–84 are disordered; it reads HFEVSESSLSSDSEADSLPDEDLETAGAPILEEEGSSESSNDEEDPKDKALPEDPE. Acidic residues-rich tracts occupy residues 41 to 52 and 59 to 73; these read SEADSLPDEDLE and LEEE…DEED. Ser68 is subject to Phosphoserine. The SNAPC5-binding stretch occupies residues 84-133; the sequence is ETCLQLNMVYQEVIREKLAEVSQLLAQNQEQQEEILFDLSGTKCPKVKDG. The 39-residue stretch at 250–288 folds into the Myb-like 1 domain; sequence EEALLGNRLDSHDWEKISNINFEGARSAEEIRKFWQSSE. Positions 289–343 constitute an HTH myb-type 1 domain; it reads HPSISKQEWSTEEVERLKAIAATHGHLEWHLVAEELGTSRSAFQCLQKFQQYNKT. Positions 317–341 form a DNA-binding region, H-T-H motif; that stretch reads WHLVAEELGTSRSAFQCLQKFQQYN. A Myb-like 2 domain is found at 344–395; sequence LKRKEWTEEEDHMLTQLVQEMRVGNHIPYRKIVYFMEGRDSMQLIYRWTKSL. HTH myb-type domains follow at residues 396–451 and 452–503; these read DPSL…HFSL and KKGR…RKKQ. 2 consecutive DNA-binding regions (H-T-H motif) follow at residues 424-447 and 476-499; these read WFKI…IRRL and WARI…KILA. A compositionally biased stretch (basic residues) spans 503-515; it reads QHLQRKRGQRPRH. Disordered regions lie at residues 503 to 558, 662 to 702, 811 to 842, and 1079 to 1117; these read QHLQ…LEKS, LMKE…QNKQ, NAKN…LGSC, and LPSP…PEKA. A compositionally biased stretch (low complexity) spans 516–546; it reads SSQWSSSGSSSSSSEDYGSSSGSDGSSGSEN. 2 stretches are compositionally biased toward polar residues: residues 672–686 and 811–826; these read LPSS…NNTA and NAKN…TGEQ. Residues 1131-1247 are SNAPC2-binding; that stretch reads AIVTWLKGCQ…NSIPTTLSPD (117 aa). A phosphoserine mark is found at Ser1252, Ser1254, Ser1301, and Ser1309. The tract at residues 1282–1333 is disordered; the sequence is PAAPDPVQSHLVSPGQRAPSPGEVSAPSPLDASDGLDDLNVLRTRRARHSRR. Residues 1324-1333 are compositionally biased toward basic residues; that stretch reads RTRRARHSRR.

In terms of assembly, part of the SNAPc composed of 5 subunits: SNAPC1, SNAPC2, SNAPC3, SNAPC4 and SNAPC5. SNAPC4 interacts with SNAPC1, SNAPC2, SNAPC5, BRF2 and TBP.

The protein localises to the nucleus. Part of the SNAPc complex required for the transcription of both RNA polymerase II and III small-nuclear RNA genes. Binds to the proximal sequence element (PSE), a non-TATA-box basal promoter element common to these 2 types of genes. Recruits TBP and BRF2 to the U6 snRNA TATA box. The polypeptide is snRNA-activating protein complex subunit 4 (Mus musculus (Mouse)).